Consider the following 344-residue polypeptide: Dihydroorotase (344 aa).

The Zn(2+) site is built by H13 and H15. Substrate-binding positions include 15–17 (HLR) and N41. Residues K99, H136, and H174 each contribute to the Zn(2+) site. K99 bears the N6-carboxylysine mark. Residue H136 coordinates substrate. Substrate is bound at residue L219. Zn(2+) is bound at residue D247. Residue D247 is part of the active site. Substrate is bound by residues H251 and A263.

The protein belongs to the metallo-dependent hydrolases superfamily. DHOase family. Class II DHOase subfamily. As to quaternary structure, homodimer. Zn(2+) is required as a cofactor.

The catalysed reaction is (S)-dihydroorotate + H2O = N-carbamoyl-L-aspartate + H(+). The protein operates within pyrimidine metabolism; UMP biosynthesis via de novo pathway; (S)-dihydroorotate from bicarbonate: step 3/3. Functionally, catalyzes the reversible cyclization of carbamoyl aspartate to dihydroorotate. The polypeptide is Dihydroorotase (Acinetobacter baumannii (strain AB307-0294)).